The sequence spans 274 residues: Thiamine kinase (274 aa).

It belongs to the thiamine kinase family.

It catalyses the reaction thiamine + ATP = thiamine phosphate + ADP + H(+). It functions in the pathway cofactor biosynthesis; thiamine diphosphate biosynthesis; thiamine phosphate from thiamine: step 1/1. Functionally, catalyzes the ATP-dependent phosphorylation of thiamine to thiamine phosphate. Is involved in thiamine salvage. This Shigella dysenteriae serotype 1 (strain Sd197) protein is Thiamine kinase.